Here is a 180-residue protein sequence, read N- to C-terminus: Putative 5'(3')-deoxyribonucleotidase (180 aa).

D9 serves as the catalytic Nucleophile. Mg(2+) is bound by residues D9, D11, and D135. The active-site Proton donor is the D11.

The protein belongs to the 5'(3')-deoxyribonucleotidase family. It depends on Mg(2+) as a cofactor.

Dephosphorylates the 5' and 2'(3')-phosphates of deoxyribonucleotides. In Staphylococcus aureus (strain Mu50 / ATCC 700699), this protein is Putative 5'(3')-deoxyribonucleotidase.